The chain runs to 278 residues: Nucleotide-binding protein Tbd_0529 (278 aa).

Position 8-15 (8-15 (GLSGSGKS)) interacts with ATP. 57-60 (DARS) contacts GTP.

This sequence belongs to the RapZ-like family.

Functionally, displays ATPase and GTPase activities. The sequence is that of Nucleotide-binding protein Tbd_0529 from Thiobacillus denitrificans (strain ATCC 25259 / T1).